The primary structure comprises 635 residues: Cerevisin (635 aa).

Residues 1–19 (MKLENTLFTLGALGSISAA) form the signal peptide. Residues 20–280 (LVIPNLENAA…VERDSIVEAT (261 aa)) constitute a propeptide that is removed on maturation. Composition is skewed to basic and acidic residues over residues 35-50 (INKEDHHERPRKVEFT), 74-85 (KGQDKESPEFNG), 94-109 (SAHEGGKGMKPKHESS), and 126-136 (GCHENKVEEKK). The interval 35–155 (INKEDHHERP…KHHEKTLEKG (121 aa)) is disordered. Residues 137–155 (MKGKKVKGKKHHEKTLEKG) are compositionally biased toward basic residues. Positions 182 to 278 (RYIIVFKRGA…DFVERDSIVE (97 aa)) constitute an Inhibitor I9 domain. The Peptidase S8 domain occupies 289–614 (PWGLARISHR…KQELNMDEFI (326 aa)). Active-site charge relay system residues include Asp-325 and His-357. A disulfide bridge connects residues Cys-460 and Cys-491. Ser-519 acts as the Charge relay system in catalysis. Residues 575–635 (DTPNVLIYNG…RDILDKLNII (61 aa)) constitute a propeptide that is removed on maturation. A glycan (N-linked (GlcNAc...) asparagine) is linked at Asn-594.

Belongs to the peptidase S8 family. Activated by N- and C-terminal proteolytic cleavage. Protease B (PrB/PRB1) processing requires at least 4 cleavages. First, the signal peptide is removed from the 76 kDa preproprotease B by signal peptidase in the ER. Then, PrB removes its own Pro-region (in trans) at the N-terminus, producing a 39 kDa form before exiting the ER. In the Golgi complex, the C-terminal Post-region of the 40 kDa proprotease B undergoes protease A (PrA/PEP4)-mediated processing to a 37 kDa intermediate, which in turn is quickly processed again by PrB in trans to yield the 31 kDa mature PrB. Post-translationally, glycosylated. Preproprotease B is a 76 kDa unglycosylated precursor that enters the endoplasmic reticulum (ER), where it receives one Asn-linked and an undetermined number of non-Asn-linked carbohydrate side chains. In the Golgi complex, the 39 kDa form becomes 40 kDa, due to elaboration of the Asn-linked side chain. The ultimate processing step removes a peptide containing the Asn-linked chain. Mature PrB has only non-Asn-linked carbohydrates.

The protein localises to the vacuole. The catalysed reaction is Hydrolysis of proteins with broad specificity, and of Bz-Arg-OEt &gt; Ac-Tyr-OEt. Does not hydrolyze peptide amides.. In terms of biological role, vacuolar proteinase B involved in protein degradation in the vacuole. Among other substrates, acts on carboxypeptidase Y (cpY/PRC1) to activate it by processing its Pro-peptide. Required for meiosis and spore formation, and for optimal survival in stationary phase. In Saccharomyces cerevisiae (strain ATCC 204508 / S288c) (Baker's yeast), this protein is Cerevisin (PRB1).